The primary structure comprises 348 residues: MTLRFGVIGTGAIGREHMKRIENKLSGGKIVAVTDMNQEAAKQVVTQMKLEADVYPDDRSLVAADNVDAVLVTSWGPAHEANVLAAIEAGKYVFVEKPLATTAEGCMKIIKAEMNHGKRLVQVGFMRRYDKGYVQLKKAIDDHFIGEPLMVRCAHRNPEVGESYIDDMAIHDTLIHEIDVLHWLIDDEYESVSVSFPKKTKHALPHLRDPRVVTLETKGGVLITAEVFVNCKYGYDIQCEVIREEGIASLPEVDSISFRKRATLGTNILMDWKQRFIEAYDVELQHFIDSIKQSGEPSGPNAWDGYVAAITADAALKASNSGQKQFISLKEKPAFYSVKKENAHEAML.

The protein belongs to the Gfo/Idh/MocA family. Homotetramer.

The catalysed reaction is myo-inositol + NAD(+) = scyllo-inosose + NADH + H(+). It carries out the reaction 1D-chiro-inositol + NAD(+) = scyllo-inosine + NADH + H(+). It participates in polyol metabolism; myo-inositol degradation into acetyl-CoA; acetyl-CoA from myo-inositol: step 1/7. Involved in the oxidation of myo-inositol (MI) and D-chiro-inositol (DCI) to 2-keto-myo-inositol (2KMI or 2-inosose) and 1-keto-D-chiro-inositol (1KDCI), respectively. In Halalkalibacterium halodurans (strain ATCC BAA-125 / DSM 18197 / FERM 7344 / JCM 9153 / C-125) (Bacillus halodurans), this protein is Inositol 2-dehydrogenase/D-chiro-inositol 3-dehydrogenase.